Here is a 360-residue protein sequence, read N- to C-terminus: Putative beta-glucosidase 15 (360 aa).

Composition is skewed to basic and acidic residues over residues 1–11 (MARRRMGEEGK) and 47–67 (GRREEDDAGGREKGEKRERKG). Disordered stretches follow at residues 1 to 21 (MARRRMGEEGKGGGWGLNGRQ) and 35 to 103 (GWRS…RAER). Over residues 75-86 (GKRRRERRRGGR) the composition is skewed to basic residues. Tyr-183 is a binding site for a beta-D-glucoside. A disulfide bridge links Cys-191 with Cys-196. A beta-D-glucoside-binding positions include Glu-254, Trp-301, 308 to 309 (EW), and Phe-317. Residue Glu-254 is the Nucleophile of the active site. The N-linked (GlcNAc...) asparagine glycan is linked to Asn-346.

Belongs to the glycosyl hydrolase 1 family.

It catalyses the reaction Hydrolysis of terminal, non-reducing beta-D-glucosyl residues with release of beta-D-glucose.. In Oryza sativa subsp. japonica (Rice), this protein is Putative beta-glucosidase 15 (BGLU15).